Reading from the N-terminus, the 365-residue chain is Heterogeneous nuclear ribonucleoproteins A1 homolog (365 aa).

The globular A domain stretch occupies residues 4 to 94; the sequence is SEAPNEPEQL…EPKRAVSRED (91 aa). RRM domains are found at residues 14-97 and 105-184; these read RKLF…DSSR and KKIF…LSKQ. Residues 95–185 are globular B domain; that stretch reads SSRPGAHLTV…QVRKALSKQE (91 aa). 2 disordered regions span residues 175-208 and 328-365; these read SQVR…RGGF and GPMK…GRRF. Composition is skewed to gly residues over residues 198-208 and 330-365; these read GSGNYGSRGGF and MKGG…GRRF. Residues 321–359 are nuclear targeting sequence; that stretch reads SQSSSNFGPMKGGNYGGGRNSGPYGGGYGGGSASSSSGY.

The protein resides in the nucleus. It localises to the cytoplasm. Its function is as follows. This protein is a component of ribonucleosomes. The polypeptide is Heterogeneous nuclear ribonucleoproteins A1 homolog (hnrnpa1) (Xenopus laevis (African clawed frog)).